The sequence spans 336 residues: DNA-directed RNA polymerase subunit alpha (336 aa).

The alpha N-terminal domain (alpha-NTD) stretch occupies residues 1 to 226 (MLIAQRPTLS…ELFGLARELN (226 aa)). Residues 241–336 (AALAADMALP…DDAAFSDDEL (96 aa)) form an alpha C-terminal domain (alpha-CTD) region.

This sequence belongs to the RNA polymerase alpha chain family. Homodimer. The RNAP catalytic core consists of 2 alpha, 1 beta, 1 beta' and 1 omega subunit. When a sigma factor is associated with the core the holoenzyme is formed, which can initiate transcription.

It catalyses the reaction RNA(n) + a ribonucleoside 5'-triphosphate = RNA(n+1) + diphosphate. Its function is as follows. DNA-dependent RNA polymerase catalyzes the transcription of DNA into RNA using the four ribonucleoside triphosphates as substrates. This chain is DNA-directed RNA polymerase subunit alpha, found in Paenarthrobacter aurescens (strain TC1).